Reading from the N-terminus, the 158-residue chain is Ribosome maturation factor RimP (158 aa).

This sequence belongs to the RimP family.

The protein resides in the cytoplasm. Functionally, required for maturation of 30S ribosomal subunits. This Leuconostoc citreum (strain KM20) protein is Ribosome maturation factor RimP.